We begin with the raw amino-acid sequence, 636 residues long: Beta-galactosidase-1-like protein 2 (636 aa).

Positions 1-32 (MTTWSLRRRPARTLGLLLLVVLGFLVLRRLDW) are cleaved as a signal peptide. Residue Glu201 is the Proton donor of the active site. Glu277 (nucleophile) is an active-site residue.

The protein belongs to the glycosyl hydrolase 35 family.

The protein localises to the secreted. This chain is Beta-galactosidase-1-like protein 2 (GLB1L2), found in Homo sapiens (Human).